Here is a 304-residue protein sequence, read N- to C-terminus: 3-diazoavenalumate denitrifying reductase (304 aa).

It belongs to the NAD(P)-dependent epimerase/dehydratase family.

The catalysed reaction is 3-diazoavenalumate + NADPH + H(+) = avenalumate + N2 + NADP(+). The enzyme catalyses 3-diazoavenalumate + NADH + H(+) = avenalumate + N2 + NAD(+). It carries out the reaction (E)-3-diazocoumarate + NADPH = N2 + (E)-4-coumarate + NADP(+). It catalyses the reaction (E)-3-diazocoumarate + NADH = N2 + (E)-4-coumarate + NAD(+). Functionally, oxidoreductase involved in the biosynthesis of avenalumic acid (AVA). Catalyzes the denitrification of 3-diazoavenalumic acid (3-DAA) to produce AVA. It can also act on 3-diazocoumaric acid (3-DCA). Can use NADPH or NADH as a reductant, with a preference for NADPH. The chain is 3-diazoavenalumate denitrifying reductase from Streptomyces sp.